The chain runs to 111 residues: Nucleoid-associated protein SynRCC307_0025 (111 aa).

It belongs to the YbaB/EbfC family. As to quaternary structure, homodimer.

Its subcellular location is the cytoplasm. It is found in the nucleoid. In terms of biological role, binds to DNA and alters its conformation. May be involved in regulation of gene expression, nucleoid organization and DNA protection. The chain is Nucleoid-associated protein SynRCC307_0025 from Synechococcus sp. (strain RCC307).